A 463-amino-acid polypeptide reads, in one-letter code: Elongation factor 1-alpha (463 aa).

One can recognise a tr-type G domain in the interval 5 to 242; that stretch reads KTHINIVVIG…DAILPPARPT (238 aa). The interval 14–21 is G1; sequence GHVDSGKS. Residue 14–21 coordinates GTP; it reads GHVDSGKS. The segment at 70 to 74 is G2; sequence GITID. The segment at 91 to 94 is G3; sequence DAPG. Residues 91-95 and 153-156 each bind GTP; these read DAPGH and NKMD. The tract at residues 153–156 is G4; that stretch reads NKMD. The G5 stretch occupies residues 194–196; that stretch reads SGW. 2 positions are modified to 5-glutamyl glycerylphosphorylethanolamine: Glu301 and Glu374.

This sequence belongs to the TRAFAC class translation factor GTPase superfamily. Classic translation factor GTPase family. EF-Tu/EF-1A subfamily.

The protein localises to the cytoplasm. This protein promotes the GTP-dependent binding of aminoacyl-tRNA to the A-site of ribosomes during protein biosynthesis. The polypeptide is Elongation factor 1-alpha (Bombyx mori (Silk moth)).